A 1043-amino-acid polypeptide reads, in one-letter code: MTLALGRRLKIRALVHVAGEPIPYFWPMRTFIHHNPLYGLEHLPFEQAVAMGERLFRAHGFLPRARQQAYLAAGRVDATVLAAQVARFCADQPEVAGLDLERLLLTLLTDVETPLGAPPTLADAADVHAVLRGAALPAREIPSGALAAQVGSDMPPGRPLYAMLDLLFGTEIGATLDELVIKSCLDFFDEGQSVWQMPGREQGLFRAWSAVARRNLRLFIRGLHIKRILAVDDTPEGIISHVMGELGVPEDDWMNHFTCELTRLHGWAGFIRWRSGAKHYHWTRRYPADLVDYLAIRLVLGLALLREHAARAGTPANLAELARRVESNPAEAYLCREFHGGRVLPEMAHAVEDAIAARRPARTARLLPRYLERKREIEARRHAQSLTRLAERAGMGAALQRLAPDDLARLTALLARFEDEEGRMWLAAREAHYMGRLLPCLDLAPPAPPEKRPFAQVMFCIDVRSERIRRHLEKLGSYQTFGIAGFFGVPVSFIGLEKGSETHLCPVVATPKNVVLELAITRNADDEAFVSTLEQVFHELKASVLSPFITVEAIGLLFGLDMFGKSLAPLAYSRWRERLHPDKPDTRLLLDKLSREQAESIIRSLQRALIVKAVRRELGIPRELLTDEMIRELRETALGNQAQAAGFAQRFELDCDAETGFVERLRQVYRIDRGYARLQLERLGRIGFTLDEQVHFVGQALRSIGLVSGFSRFVLLTGHGSTSENNPYESALDCGACGGNHGITNARVLAQIANKTAVRARLREQGIVIADDTWFVPAFHNTTTDELRLYDLDLLPPSHLVYTERLINGLQAASHLCAAERMRTLQDTPGDADENGDSAGAYRLARRNALDWSQVRPEWGLARNAAFVIGRRDATGGLDLEGRVFLHSYDYRCDPRGRLLENILAGPLVVGQWINMEHYFSAVDNAHYGSGSKVYHNIAGRFGVMTGNLSDLRTGLPAQTVLKDSAPYHEPLRLLTVIEAPFAHARAAVEGVVKVKNLMHNGWLRMAVVDPETRFAYVFEDGGWRQYPHDAVSEAVEEKETVL.

Positions 460, 462, 719, and 734 each coordinate Zn(2+).

Belongs to the inorganic carbon transporter (TC 9.A.2) DabA family. Forms a complex with DabB. Zn(2+) is required as a cofactor.

It is found in the cell inner membrane. Its function is as follows. Part of an energy-coupled inorganic carbon pump. In Thiobacillus denitrificans (strain ATCC 25259 / T1), this protein is Probable inorganic carbon transporter subunit DabA.